The sequence spans 618 residues: Very-long-chain aldehyde decarbonylase GL1-3 (618 aa).

The next 7 helical transmembrane spans lie at 9–29 (LSSW…GPVV), 46–66 (TSWC…MLFF), 91–111 (MVIM…FPAT), 121–141 (GWAI…YWAH), 174–194 (LESL…FMAG), 289–309 (DFVF…PFAF), and 315–335 (LPFA…GFML). One can recognise a Fatty acid hydroxylase domain in the interval 127 to 267 (VLHVAVSEPA…MPLFDALGGT (141 aa)).

Belongs to the sterol desaturase family. In terms of assembly, homodimer. Expressed in germinating seeds and stamens.

It is found in the endoplasmic reticulum membrane. It carries out the reaction a long-chain fatty aldehyde + 2 NADPH + O2 + H(+) = a long-chain alkane + formate + 2 NADP(+) + H2O. Functionally, aldehyde decarbonylase involved in the conversion of aldehydes to alkanes. Core component of a very-long-chain alkane synthesis complex. The sequence is that of Very-long-chain aldehyde decarbonylase GL1-3 from Oryza sativa subsp. japonica (Rice).